The following is a 121-amino-acid chain: Ribonuclease P protein component (121 aa).

This sequence belongs to the RnpA family. As to quaternary structure, consists of a catalytic RNA component (M1 or rnpB) and a protein subunit.

It carries out the reaction Endonucleolytic cleavage of RNA, removing 5'-extranucleotides from tRNA precursor.. Its function is as follows. RNaseP catalyzes the removal of the 5'-leader sequence from pre-tRNA to produce the mature 5'-terminus. It can also cleave other RNA substrates such as 4.5S RNA. The protein component plays an auxiliary but essential role in vivo by binding to the 5'-leader sequence and broadening the substrate specificity of the ribozyme. In Neisseria gonorrhoeae (strain ATCC 700825 / FA 1090), this protein is Ribonuclease P protein component.